The primary structure comprises 298 residues: Nucleotide-binding protein Dred_3054 (298 aa).

Residue 20-27 (GMSGAGKT) coordinates ATP. 71–74 (DIRG) is a binding site for GTP.

This sequence belongs to the RapZ-like family.

In terms of biological role, displays ATPase and GTPase activities. In Desulforamulus reducens (strain ATCC BAA-1160 / DSM 100696 / MI-1) (Desulfotomaculum reducens), this protein is Nucleotide-binding protein Dred_3054.